The sequence spans 84 residues: Large ribosomal subunit protein bL28 (84 aa).

Belongs to the bacterial ribosomal protein bL28 family.

The sequence is that of Large ribosomal subunit protein bL28 from Deinococcus geothermalis (strain DSM 11300 / CIP 105573 / AG-3a).